The primary structure comprises 554 residues: Formate--tetrahydrofolate ligase (554 aa).

Position 63-70 (63-70 (TPAGEGKT)) interacts with ATP.

It belongs to the formate--tetrahydrofolate ligase family.

The enzyme catalyses (6S)-5,6,7,8-tetrahydrofolate + formate + ATP = (6R)-10-formyltetrahydrofolate + ADP + phosphate. Its pathway is one-carbon metabolism; tetrahydrofolate interconversion. This is Formate--tetrahydrofolate ligase from Halothermothrix orenii (strain H 168 / OCM 544 / DSM 9562).